The following is an 83-amino-acid chain: uncharacterized protein (83 aa).

This is an uncharacterized protein from Dictyostelium discoideum (Social amoeba).